A 297-amino-acid chain; its full sequence is MENLLSTVNAILITGPTASGKSALAVELAKRHGGAVVNADSMQVYDTLRVLTARPSEVEMQGVPHHLYGHVPAGAAYSTGAWLRDVSALLPALRAAGQLPVFVGGTGLYFKALTGGLSDMPDIPEALREELRGRLLMEGPDRLHAELAEVDPAMAAGLNRQDGQRIVRALEVVKATGRSIADFQGQSGPVVIDAAQARKIVVLPERAVLHARINGRFEKMLRERAEDEVRALLALGLPAEAPVMKAIGVSQMAAMLSGEMTRDDVLEKGAAATRQYAKRQMTWFRNQMDESWERLTL.

15–22 (GPTASGKS) serves as a coordination point for ATP. Residue 17–22 (TASGKS) coordinates substrate. Interaction with substrate tRNA regions lie at residues 40–43 (DSMQ) and 164–168 (QRIVR).

This sequence belongs to the IPP transferase family. In terms of assembly, monomer. It depends on Mg(2+) as a cofactor.

It carries out the reaction adenosine(37) in tRNA + dimethylallyl diphosphate = N(6)-dimethylallyladenosine(37) in tRNA + diphosphate. Catalyzes the transfer of a dimethylallyl group onto the adenine at position 37 in tRNAs that read codons beginning with uridine, leading to the formation of N6-(dimethylallyl)adenosine (i(6)A). The polypeptide is tRNA dimethylallyltransferase (Rhizobium leguminosarum bv. trifolii (strain WSM2304)).